Consider the following 526-residue polypeptide: Cytochrome P450 monooxygenase 253 (526 aa).

A run of 3 helical transmembrane segments spans residues isoleucine 13–isoleucine 33, phenylalanine 115–lysine 135, and isoleucine 306–leucine 326. Heme is bound at residue cysteine 451.

Belongs to the cytochrome P450 family. Heme is required as a cofactor.

It is found in the membrane. It participates in secondary metabolite biosynthesis. Functionally, cytochrome P450 monooxygenase that is able to use delta(6)-protoilludene as a substrate to produce delta(6)-protoilludene-8-ol. This is Cytochrome P450 monooxygenase 253 from Postia placenta (strain ATCC 44394 / Madison 698-R) (Brown rot fungus).